The following is a 448-amino-acid chain: UPF0053 protein sll0260 (448 aa).

The 202-residue stretch at 2-203 (FSSSVELELF…AQAGMIDEAE (202 aa)) folds into the CNNM transmembrane domain. Helical transmembrane passes span 11–31 (FFIF…IAIV), 62–82 (FLSA…AVGG), 106–126 (LSIS…GELV), and 142–162 (VAPA…LLGV). 2 consecutive CBS domains span residues 222–281 (MTPR…GQKI) and 286–345 (IVQP…NDDE).

It belongs to the UPF0053 family.

The protein localises to the cell membrane. The polypeptide is UPF0053 protein sll0260 (Synechocystis sp. (strain ATCC 27184 / PCC 6803 / Kazusa)).